The sequence spans 726 residues: MEQQQKQEPGGGGGGVRVVARICPCAPPPPPPDAALNFQVAALNDPALISFIPRRPTASAATAAASGRGDGPKDKQQQQQQKYRVDGCYLRDDPNHRVFHNEVKPLIDGRGGGGGGRGGAKACVVACGDAAAKRHLFMGSPDQPGLFTMAMAQLLDSSKAIGAAVTVSSYQVLQDTHILDLLEPKNHEVLILEDADGQTHLKGLSRVGVNSIEEFSQLCCCATNQQRHHPAKDSTQLQDWGHQGLIIYVSSFDQQGKECALAKINFLNLAGYVDPKQKKNEGLALLTGNKSMHALMNVVQALNSNQRFVPYRQSKVTRILQDSLCKSKTSGSVLIACLAEDCCQDSVSTLALASRSSQVVNEQYYSLSLSAKKSSKSNMNLPTDAKTLSRTFIHKTMSMQEKNARPGFNNSGVKGGQTPTANRRTQPIISSTKKSGSSICTSIKMKENYAKPKISGRKLFCPSNNSLKEENATDVASTVVTETKSATVRIQADEVQPLVGMEIRAALLNEGCSEIGNTGDVKSSEMQEVVHCSTQELLASTIQEEDYALSNMEPENSCTDMGLTCSSITDNLVEKTPASSTLSSPKLSDRLREISNSLKLLSTRPVSVRAEKWDIECARRINTIAPEPKTPEVHLKFEQAEDPKDKLTARSTGIKKSLAQECLTFLNSANKEQLKSLKGIGDKRANYILELREESPELFKEISDLRDIIGMNSKEIKKMMSGIIDP.

Disordered regions lie at residues 1–20 (MEQQQKQEPGGGGGGVRVVA), 60–82 (AATAAASGRGDGPKDKQQQQQQK), and 402–423 (KNARPGFNNSGVKGGQTPTANR). One can recognise a Kinesin motor domain in the interval 15 to 359 (GVRVVARICP…LALASRSSQV (345 aa)). A compositionally biased stretch (polar residues) spans 408–423 (FNNSGVKGGQTPTANR).

The protein belongs to the TRAFAC class myosin-kinesin ATPase superfamily. Kinesin family. KIN-10 subfamily.

The chain is Kinesin-like protein KIN-10B from Oryza sativa subsp. japonica (Rice).